The primary structure comprises 248 residues: Probable transcriptional regulatory protein Psyr_1407 (248 aa).

Belongs to the TACO1 family.

The protein resides in the cytoplasm. In Pseudomonas syringae pv. syringae (strain B728a), this protein is Probable transcriptional regulatory protein Psyr_1407.